The sequence spans 533 residues: DNA-directed RNA polymerase III subunit RPC3 (533 aa).

Positions 161–183 (PLVPDTDSSDPGPPPPAPNLVIN) are disordered. Phosphoserine is present on Ser194. The disordered stretch occupies residues 197-228 (GKGKRRRSSDEDAAGEPKAKKPRCTDNEEPTP). The segment covering 211-222 (GEPKAKKPRCTD) has biased composition (basic and acidic residues).

This sequence belongs to the eukaryotic RPC3/POLR3C RNA polymerase subunit family. As to quaternary structure, component of the RNA polymerase III complex consisting of 17 subunits: a ten-subunit horseshoe-shaped catalytic core composed of POLR3A/RPC1, POLR3B/RPC2, POLR1C/RPAC1, POLR1D/RPAC2, POLR3K/RPC10, POLR2E/RPABC1, POLR2F/RPABC2, POLR2H/RPABC3, POLR2K/RPABC4 and POLR2L/RPABC5; a mobile stalk composed of two subunits POLR3H/RPC8 and CRCP/RPC9, protruding from the core and functioning primarily in transcription initiation; and additional subunits homologous to general transcription factors of the RNA polymerase II machinery, POLR3C/RPC3-POLR3F/RPC6-POLR3G/RPC7 heterotrimer required for transcription initiation and POLR3D/RPC4-POLR3E/RPC5 heterodimer involved in both transcription initiation and termination. Directly interacts with POLR3G/RPC7 and POLR3GL. Directly interacts with POLR3F/RPC6. Interacts with GTF3C4. As part of the RNA polymerase III complex, interacts with PKP2.

The protein resides in the nucleus. In terms of biological role, DNA-dependent RNA polymerase catalyzes the transcription of DNA into RNA using the four ribonucleoside triphosphates as substrates. Specific peripheric component of RNA polymerase III (Pol III) which synthesizes small non-coding RNAs including 5S rRNA, snRNAs, tRNAs and miRNAs from at least 500 distinct genomic loci. Part of POLR3C/RPC3-POLR3F/RPC6-POLR3G/RPC7 heterotrimer, coordinates the dynamics of Pol III stalk and clamp modules during the transition from apo to elongation state. Pol III plays a key role in sensing and limiting infection by intracellular bacteria and DNA viruses. Acts as a nuclear and cytosolic DNA sensor involved in innate immune response. Can sense non-self dsDNA that serves as template for transcription into dsRNA. The non-self RNA polymerase III transcripts, such as Epstein-Barr virus-encoded RNAs (EBERs) induce type I interferon and NF-kappa-B through the RIG-I pathway. Preferentially binds single-stranded DNA (ssDNA) in a sequence-independent manner. This is DNA-directed RNA polymerase III subunit RPC3 from Rattus norvegicus (Rat).